Reading from the N-terminus, the 396-residue chain is E3 ubiquitin-protein ligase NHLRC1 (396 aa).

Residues 23-69 (CKVCFERFGHRQQRRPRNLPCGHVVCLACVAALAHPRTLALECPFCR) form an RING-type zinc finger. 6 NHL repeats span residues 110–154 (ALTC…FDSG), 158–201 (AHQF…FDFF), 202–242 (GQIK…LEAD), 245–298 (EGVL…FNSS), 299–347 (MQLI…LGKP), and 348–391 (EEFP…FKVM).

As to quaternary structure, interacts with AGL. Interacts (via the NHL repeats) with EPM2A/laforin. Forms a complex with EPM2A/laforin and HSP70.

Its subcellular location is the endoplasmic reticulum. It is found in the nucleus. The enzyme catalyses S-ubiquitinyl-[E2 ubiquitin-conjugating enzyme]-L-cysteine + [acceptor protein]-L-lysine = [E2 ubiquitin-conjugating enzyme]-L-cysteine + N(6)-ubiquitinyl-[acceptor protein]-L-lysine.. It functions in the pathway protein modification; protein ubiquitination. E3 ubiquitin-protein ligase. Together with the phosphatase EPM2A/laforin, appears to be involved in the clearance of toxic polyglucosan and protein aggregates via multiple pathways. In complex with EPM2A/laforin and HSP70, suppresses the cellular toxicity of misfolded proteins by promoting their degradation through the ubiquitin-proteasome system (UPS). Ubiquitinates the glycogen-targeting protein phosphatase subunits PPP1R3C/PTG and PPP1R3D in a laforin-dependent manner and targets them for proteasome-dependent degradation, thus decreasing glycogen accumulation. Polyubiquitinates EPM2A/laforin and ubiquitinates AGL and targets them for proteasome-dependent degradation. Also promotes proteasome-independent protein degradation through the macroautophagy pathway. The sequence is that of E3 ubiquitin-protein ligase NHLRC1 (Nhlrc1) from Rattus norvegicus (Rat).